A 243-amino-acid chain; its full sequence is Orotidine 5'-phosphate decarboxylase (243 aa).

Substrate contacts are provided by residues Asp19, Lys41, 69–78, Thr124, Arg185, Gln194, Gly214, and Arg215; that span reads DLKFFDIPAT. Lys71 functions as the Proton donor in the catalytic mechanism.

It belongs to the OMP decarboxylase family. Type 1 subfamily. In terms of assembly, homodimer.

It catalyses the reaction orotidine 5'-phosphate + H(+) = UMP + CO2. It functions in the pathway pyrimidine metabolism; UMP biosynthesis via de novo pathway; UMP from orotate: step 2/2. In terms of biological role, catalyzes the decarboxylation of orotidine 5'-monophosphate (OMP) to uridine 5'-monophosphate (UMP). This is Orotidine 5'-phosphate decarboxylase from Xanthomonas euvesicatoria pv. vesicatoria (strain 85-10) (Xanthomonas campestris pv. vesicatoria).